Reading from the N-terminus, the 327-residue chain is Aspartate--ammonia ligase (327 aa).

The protein belongs to the class-II aminoacyl-tRNA synthetase family. AsnA subfamily.

The protein resides in the cytoplasm. It catalyses the reaction L-aspartate + NH4(+) + ATP = L-asparagine + AMP + diphosphate + H(+). The protein operates within amino-acid biosynthesis; L-asparagine biosynthesis; L-asparagine from L-aspartate (ammonia route): step 1/1. The sequence is that of Aspartate--ammonia ligase from Bacillus cereus (strain ATCC 10987 / NRS 248).